The following is a 318-amino-acid chain: Homoserine kinase (318 aa).

97 to 107 (PIGSGLGSSAC) is a binding site for ATP.

Belongs to the GHMP kinase family. Homoserine kinase subfamily.

The protein localises to the cytoplasm. It carries out the reaction L-homoserine + ATP = O-phospho-L-homoserine + ADP + H(+). The protein operates within amino-acid biosynthesis; L-threonine biosynthesis; L-threonine from L-aspartate: step 4/5. Its function is as follows. Catalyzes the ATP-dependent phosphorylation of L-homoserine to L-homoserine phosphate. In Photobacterium profundum (strain SS9), this protein is Homoserine kinase.